Reading from the N-terminus, the 347-residue chain is NADH-ubiquinone oxidoreductase chain 2 (347 aa).

A run of 10 helical transmembrane segments spans residues 13–33 (IILG…WIGF), 59–79 (YFLT…TNLL), 96–116 (AVMT…FWVP), 122–142 (IPLS…LSVL), 149–169 (VSPT…GWGG), 178–198 (ILAY…AYNP), 201–221 (TLLN…LFMF), 247–267 (IMLS…WMII), 274–294 (ESLL…YFYM), and 323–343 (VPLL…APAL).

It belongs to the complex I subunit 2 family. Core subunit of respiratory chain NADH dehydrogenase (Complex I) which is composed of 45 different subunits. Interacts with TMEM242.

It is found in the mitochondrion inner membrane. It catalyses the reaction a ubiquinone + NADH + 5 H(+)(in) = a ubiquinol + NAD(+) + 4 H(+)(out). In terms of biological role, core subunit of the mitochondrial membrane respiratory chain NADH dehydrogenase (Complex I) which catalyzes electron transfer from NADH through the respiratory chain, using ubiquinone as an electron acceptor. Essential for the catalytic activity and assembly of complex I. The sequence is that of NADH-ubiquinone oxidoreductase chain 2 from Megaderma spasma (Lesser false vampire bat).